A 691-amino-acid polypeptide reads, in one-letter code: MTLQVCKDDPWLKPFEEELLRRQALVGQWKDHFAKEGGLAEFAASYKRYGLHVNKDNSVTYREWAPGASEAVLTGDFNGWDRQQYHMTRDEYGLWSVTVPPTSDGQVAIPHNSKVKLALKTSNGQWVDRLPAWSTYVVQDLSKSPIYEAVFWNPPESEKYQWKNKSPPTPANAQIYEAHVGISSSEPRVGTYKEFTKNILPRIHKLGYNVIQLMAIMEHAYYASFGYQVTSFYAISSRYGTPEDLKELIDTAHGMGITVLLDVVHSHACKNVDDGLNNFDGTDHQYFHGGAKGDHPQWDSKLFDYGKYEVLRFLLSNLRFYIEEYHFDGFRFDGVTSMLYKHHGLGTGFSGGYHEYFGDEHVDQQAVVYLMLAHELMRELQPLLRPGEDAGNFLSIAEDVSGMPALCRPVSEGGVGFDYRLAMAIPDMWIKLVKETRDEDWDMGNIVFTLTNRRHREKTIAYAESHDQALVGDKTLAFWLMDKEMYTSMSVLSDPNPIIDRGIALHKMIRLITHSLGGEGYLNFEGNEFGHPEWLDFPREGNGSSFHYCRRQWPVVDDKLLRYQHLNEFDAAMQHRGDHYGWLSADQAYVSLKNEDDKVVVYERAGLVFVFNFHPNKSFTDYRIGVDQPGTYTLVLDSDSPEFGGFGRIDHEKTRCHTEPLEWNGRANCMHIYIPSRVALVFAREDDPRRK.

W80 and K116 together coordinate (1,4-alpha-D-glucosyl)n. D333 serves as the catalytic Nucleophile. E398 functions as the Proton donor in the catalytic mechanism.

Belongs to the glycosyl hydrolase 13 family. GlgB subfamily.

Its subcellular location is the cytoplasm. It catalyses the reaction Transfers a segment of a (1-&gt;4)-alpha-D-glucan chain to a primary hydroxy group in a similar glucan chain.. The protein operates within glycan biosynthesis; glycogen biosynthesis. Functionally, glycogen-branching enzyme participates in the glycogen biosynthetic process along with glycogenin and glycogen synthase. Generates alpha-1,6-glucosidic branches from alpha-1,4-linked glucose chains, to increase solubility of the glycogen polymer. In Yarrowia lipolytica (strain CLIB 122 / E 150) (Yeast), this protein is 1,4-alpha-glucan-branching enzyme (GLC3).